Here is a 21-residue protein sequence, read N- to C-terminus: MICYNHQSSEPPTTXTCSEGQ.

The disordered stretch occupies residues 1–21 (MICYNHQSSEPPTTXTCSEGQ).

In terms of processing, contains 4 disulfide bonds. In terms of tissue distribution, expressed by the venom gland.

Its subcellular location is the secreted. Functionally, binds to muscle nicotinic acetylcholine receptor (nAChR) and inhibit acetylcholine from binding to the receptor, thereby impairing neuromuscular transmission. The polypeptide is Short neurotoxin E1 (Micrurus pyrrhocryptus (Coral snake)).